Consider the following 341-residue polypeptide: MKFTATQIAEILDGKVEGNPEAEVSELAKIEEGSEGSLTFLSNPKYTSFLYTTNASVTIVNDDFEVEQPVNTTLIKVKDAYKAFSTLLEYYNQIKLNKSGIEQPSHISESAKYGEGLYLGAFAYIGENVSIGENVKIYPNVYIGDNVKIGNNVTLFPGVKVYSESLIGSEVTIHSGVVIGADGFGFSPGDTGEYSKVPQIGNVIIEDYVDIGAGTTIDRATLGSTIIRKGAKLDNHIQIAHNVEIGENTAIAAQTGIAGSTKIGKNCLIGGQVGIAGHLTIGNRVKIQAQSGIGRDIKDDEMLQGSPAIGYSDYNKSYIHFKNLPKTMNIIHQLEKKINNG.

H241 functions as the Proton acceptor in the catalytic mechanism.

The protein belongs to the transferase hexapeptide repeat family. LpxD subfamily. As to quaternary structure, homotrimer.

It catalyses the reaction a UDP-3-O-[(3R)-3-hydroxyacyl]-alpha-D-glucosamine + a (3R)-hydroxyacyl-[ACP] = a UDP-2-N,3-O-bis[(3R)-3-hydroxyacyl]-alpha-D-glucosamine + holo-[ACP] + H(+). Its pathway is bacterial outer membrane biogenesis; LPS lipid A biosynthesis. Catalyzes the N-acylation of UDP-3-O-acylglucosamine using 3-hydroxyacyl-ACP as the acyl donor. Is involved in the biosynthesis of lipid A, a phosphorylated glycolipid that anchors the lipopolysaccharide to the outer membrane of the cell. This Christiangramia forsetii (strain DSM 17595 / CGMCC 1.15422 / KT0803) (Gramella forsetii) protein is UDP-3-O-acylglucosamine N-acyltransferase.